The following is a 427-amino-acid chain: L-threonine dehydratase biosynthetic IlvA (427 aa).

Lys63 bears the N6-(pyridoxal phosphate)lysine mark. Pyridoxal 5'-phosphate contacts are provided by residues Asn90, 193-197 (GGGGC), and Ser319. Residues 343–417 (HYFLVDFPQK…TEMHVETLQP (75 aa)) form the ACT-like domain.

Belongs to the serine/threonine dehydratase family. As to quaternary structure, homotetramer. The cofactor is pyridoxal 5'-phosphate.

It catalyses the reaction L-threonine = 2-oxobutanoate + NH4(+). Its pathway is amino-acid biosynthesis; L-isoleucine biosynthesis; 2-oxobutanoate from L-threonine: step 1/1. Catalyzes the anaerobic formation of alpha-ketobutyrate and ammonia from threonine in a two-step reaction. The first step involved a dehydration of threonine and a production of enamine intermediates (aminocrotonate), which tautomerizes to its imine form (iminobutyrate). Both intermediates are unstable and short-lived. The second step is the nonenzymatic hydrolysis of the enamine/imine intermediates to form 2-ketobutyrate and free ammonia. In the low water environment of the cell, the second step is accelerated by RidA. The polypeptide is L-threonine dehydratase biosynthetic IlvA (ilvA) (Mycobacterium leprae (strain TN)).